A 256-amino-acid chain; its full sequence is Floral homeotic protein APETALA 1-1 (256 aa).

Residues 1-61 (MGRGRVQLKR…GKLFEYSTDS (61 aa)) enclose the MADS-box domain. A K-box domain is found at 88–178 (NTNWSMEYNR…SKQIKEREKV (91 aa)).

In terms of assembly, homodimer capable of binding to CArG-box sequences. As to expression, expressed in some of the meristems of arrest-stage broccoli heads.

It localises to the nucleus. Functionally, transcription factor that promotes early floral meristem identity in synergy with LEAFY. Displays a redundant function with CAULIFLOWER in the up-regulation of LEAFY. Required subsequently for the transition of an inflorescence meristem into a floral meristem, and for the normal development of sepals and petals in flowers. Regulates positively B class homeotic proteins. This chain is Floral homeotic protein APETALA 1-1 (1AP1), found in Brassica oleracea var. italica (Broccoli).